The sequence spans 273 residues: Oligodendrocyte transcription factor 3 (273 aa).

Low complexity predominate over residues 1-14 (MNSDSSSVSSRASS). Positions 1 to 72 (MNSDSSSVSS…KAAGESSKYK (72 aa)) are disordered. A compositionally biased stretch (basic residues) spans 24 to 34 (DHHHRHHHHHQ). Positions 37–47 (RLNSVSSTQGD) are enriched in polar residues. A coiled-coil region spans residues 69 to 90 (SKYKIKKQLSEQDLQQLRLKIN). The bHLH domain occupies 84-138 (QLRLKINGRERKRMHDLNLAMDGLREVMPYAHGPSVRKLSKIATLLLARNYILML).

Weakly expressed, mainly in non-neural tissues.

It is found in the nucleus. Its function is as follows. May determine the distinct specification program of class A neurons in the dorsal part of the spinal cord and suppress specification of class B neurons. This chain is Oligodendrocyte transcription factor 3 (Olig3), found in Mus musculus (Mouse).